We begin with the raw amino-acid sequence, 402 residues long: Envelope glycoprotein D (402 aa).

The N-terminal stretch at 1–17 is a signal peptide; it reads MLLAALLAALVARTTLG. Disulfide bonds link Cys66–Cys189, Cys105–Cys205, and Cys117–Cys126. Residues 238–316 are profusion; sequence YRKNGRTLPR…RPTPRPPRPE (79 aa). The tract at residues 252-350 is disordered; the sequence is ATPYAIDPAR…PRTPAAPGVS (99 aa). Residues 269–278 show a composition bias toward basic residues; the sequence is PRPRPRPRPR. Residues 282–292 are compositionally biased toward pro residues; that stretch reads EPAPATPAPPD. Positions 293-304 are enriched in basic and acidic residues; it reads RLPEPATRDHAA. A helical membrane pass occupies residues 356-376; sequence IVGTGTAMGALLVGVCVYIFF.

Belongs to the herpesviridae glycoprotein D family. In terms of processing, not N-glycosylated.

The protein resides in the virion membrane. Functionally, envelope glycoprotein that binds to the host cell entry receptor NECTIN1, promoting the virus entry into host cells. In contrast, does not use host TNFRSF14 as receptor. May trigger fusion with host membrane, by recruiting the fusion machinery composed of gB and gH/gL. The chain is Envelope glycoprotein D from Suid herpesvirus 1 (strain Rice) (SuHV-1).